The sequence spans 493 residues: Glutamate--tRNA ligase (493 aa).

The 'HIGH' region motif lies at 10–20; the sequence is PSPTGDPHVGT. A 'KMSKS' region motif is present at residues 251–255; sequence KLSKR. Lys254 lines the ATP pocket.

This sequence belongs to the class-I aminoacyl-tRNA synthetase family. Glutamate--tRNA ligase type 1 subfamily. In terms of assembly, monomer.

Its subcellular location is the cytoplasm. It catalyses the reaction tRNA(Glu) + L-glutamate + ATP = L-glutamyl-tRNA(Glu) + AMP + diphosphate. Catalyzes the attachment of glutamate to tRNA(Glu) in a two-step reaction: glutamate is first activated by ATP to form Glu-AMP and then transferred to the acceptor end of tRNA(Glu). The chain is Glutamate--tRNA ligase from Pseudomonas fluorescens (strain Pf0-1).